A 456-amino-acid polypeptide reads, in one-letter code: Chitobiosyldiphosphodolichol beta-mannosyltransferase (456 aa).

Residues Met-1 to Tyr-22 are Lumenal-facing. A helical membrane pass occupies residues Cys-23–Phe-43. Residues His-44 to Asp-103 lie on the Cytoplasmic side of the membrane. An intramembrane region (helical) is located at residues Ile-104–Leu-124. The Cytoplasmic portion of the chain corresponds to Lys-125 to Ser-456.

The protein belongs to the glycosyltransferase group 1 family.

The protein resides in the endoplasmic reticulum membrane. It carries out the reaction an N,N'-diacetylchitobiosyl-diphospho-di-trans,poly-cis-dolichol + GDP-alpha-D-mannose = a beta-D-Man-(1-&gt;4)-beta-D-GlcNAc-(1-&gt;4)-alpha-D-GlcNAc-diphospho-di-trans,poly-cis-dolichol + GDP + H(+). It functions in the pathway protein modification; protein glycosylation. In terms of biological role, participates in the formation of the lipid-linked precursor oligosaccharide for N-glycosylation. Involved in assembling the dolichol-pyrophosphate-GlcNAc(2)-Man(5) intermediate on the cytoplasmic surface of the ER. The chain is Chitobiosyldiphosphodolichol beta-mannosyltransferase (ALG1) from Candida albicans (strain SC5314 / ATCC MYA-2876) (Yeast).